Reading from the N-terminus, the 140-residue chain is L-fucose mutarotase (140 aa).

His-22 serves as the catalytic Proton donor. Residues Asp-30, Arg-107, and 129–131 (YGN) contribute to the substrate site.

The protein belongs to the RbsD / FucU family. FucU mutarotase subfamily. Homodecamer.

The protein localises to the cytoplasm. It catalyses the reaction alpha-L-fucose = beta-L-fucose. It participates in carbohydrate metabolism; L-fucose metabolism. Involved in the anomeric conversion of L-fucose. This Klebsiella pneumoniae (strain 342) protein is L-fucose mutarotase.